A 342-amino-acid chain; its full sequence is Olfactory receptor 51F2 (342 aa).

Over 1-39 (MTETSLSSQCFPMSVLNNTIAEPLIFLLMGIPGLKATQY) the chain is Extracellular. Residue Asn17 is glycosylated (N-linked (GlcNAc...) asparagine). A helical transmembrane segment spans residues 40–60 (WISIPFCLLYVVAVSGNSMIL). The Cytoplasmic portion of the chain corresponds to 61–68 (FVVLCERS). A helical membrane pass occupies residues 69-89 (LHKPMYYFLSMLSATDLSLSL). Residues 90–113 (CTLSTTLGVFWFEAREINLNACIA) are Extracellular-facing. A disulfide bridge links Cys111 with Cys203. A helical membrane pass occupies residues 114–134 (QMFFLHGFTFMESGVLLAMAF). The Cytoplasmic segment spans residues 135-153 (DRFVAICYPLRYTTILTNA). Residues 154 to 174 (RIAKIGMSMLIRNVAVMLPVM) traverse the membrane as a helical segment. Topologically, residues 175-210 (LFVKRLSFCSSMVLSHSYCYHVDLIQLSCTDNRINS) are extracellular. A helical transmembrane segment spans residues 211 to 231 (ILGLFALLSTTGFDCPCILLS). The Cytoplasmic segment spans residues 232 to 251 (YILIIRSVLSIASSEERRKA). The helical transmembrane segment at 252–272 (FNTCTSHISAVSIFYLPLISL) threads the bilayer. Residues 273 to 287 (SLVHRYGHSAPPFVH) are Extracellular-facing. Residues 288-308 (IIMANVFLLIPPVLNPIIYSV) traverse the membrane as a helical segment. Over 309-342 (KIKQIQKAIIKVLIQKHSKSNHQLFLIRDKAIYE) the chain is Cytoplasmic.

This sequence belongs to the G-protein coupled receptor 1 family.

It localises to the cell membrane. Odorant receptor. The sequence is that of Olfactory receptor 51F2 (OR51F2) from Homo sapiens (Human).